The sequence spans 137 residues: Large ribosomal subunit protein uL16 (137 aa).

The protein belongs to the universal ribosomal protein uL16 family. In terms of assembly, part of the 50S ribosomal subunit.

Its function is as follows. Binds 23S rRNA and is also seen to make contacts with the A and possibly P site tRNAs. In Pseudomonas entomophila (strain L48), this protein is Large ribosomal subunit protein uL16.